The following is a 349-amino-acid chain: Glycerol-3-phosphate dehydrogenase [NAD(+)], cytoplasmic (349 aa).

Residues 10–15 (GSGDWG), Lys-120, and Ala-153 each bind NAD(+). Residue Lys-120 coordinates substrate. Residue Ser-154 is modified to Phosphoserine. Lys-204 functions as the Proton acceptor in the catalytic mechanism. Arg-269 is a binding site for NAD(+). 269–270 (RN) lines the substrate pocket. Lys-289 carries the post-translational modification N6-succinyllysine. NAD(+) contacts are provided by Lys-296 and Gln-298. Tyr-326 carries the phosphotyrosine modification.

This sequence belongs to the NAD-dependent glycerol-3-phosphate dehydrogenase family. As to quaternary structure, homodimer.

The protein localises to the cytoplasm. It carries out the reaction sn-glycerol 3-phosphate + NAD(+) = dihydroxyacetone phosphate + NADH + H(+). Has glycerol-3-phosphate dehydrogenase activity. The protein is Glycerol-3-phosphate dehydrogenase [NAD(+)], cytoplasmic (GPD1) of Oryctolagus cuniculus (Rabbit).